Here is a 462-residue protein sequence, read N- to C-terminus: Exodeoxyribonuclease 7 large subunit (462 aa).

The protein belongs to the XseA family. As to quaternary structure, heterooligomer composed of large and small subunits.

Its subcellular location is the cytoplasm. The enzyme catalyses Exonucleolytic cleavage in either 5'- to 3'- or 3'- to 5'-direction to yield nucleoside 5'-phosphates.. Functionally, bidirectionally degrades single-stranded DNA into large acid-insoluble oligonucleotides, which are then degraded further into small acid-soluble oligonucleotides. In Pectobacterium carotovorum subsp. carotovorum (strain PC1), this protein is Exodeoxyribonuclease 7 large subunit.